A 601-amino-acid polypeptide reads, in one-letter code: Amino-acid acetyltransferase, mitochondrial (601 aa).

The N-acetyltransferase domain maps to 401-558 (FTMDNLIASK…KKKQNNKKKK (158 aa)).

Belongs to the acetyltransferase family.

The protein resides in the mitochondrion. The enzyme catalyses L-glutamate + acetyl-CoA = N-acetyl-L-glutamate + CoA + H(+). It participates in amino-acid biosynthesis; L-arginine biosynthesis; N(2)-acetyl-L-ornithine from L-glutamate: step 1/4. Functionally, N-acetylglutamate synthase involved in arginine biosynthesis. This is Amino-acid acetyltransferase, mitochondrial (ARG2) from Lodderomyces elongisporus (strain ATCC 11503 / CBS 2605 / JCM 1781 / NBRC 1676 / NRRL YB-4239) (Yeast).